Reading from the N-terminus, the 284-residue chain is 3-methyl-2-oxobutanoate hydroxymethyltransferase 2 (284 aa).

Mg(2+)-binding residues include Asp-49 and Asp-88. 3-methyl-2-oxobutanoate-binding positions include Asp-49–Ser-50, Asp-88, and Lys-118. Glu-120 provides a ligand contact to Mg(2+). Catalysis depends on Glu-187, which acts as the Proton acceptor.

This sequence belongs to the PanB family. In terms of assembly, homodecamer; pentamer of dimers. It depends on Mg(2+) as a cofactor.

It is found in the cytoplasm. The enzyme catalyses 3-methyl-2-oxobutanoate + (6R)-5,10-methylene-5,6,7,8-tetrahydrofolate + H2O = 2-dehydropantoate + (6S)-5,6,7,8-tetrahydrofolate. The protein operates within cofactor biosynthesis; (R)-pantothenate biosynthesis; (R)-pantoate from 3-methyl-2-oxobutanoate: step 1/2. Its function is as follows. Catalyzes the reversible reaction in which hydroxymethyl group from 5,10-methylenetetrahydrofolate is transferred onto alpha-ketoisovalerate to form ketopantoate. This Burkholderia cenocepacia (strain HI2424) protein is 3-methyl-2-oxobutanoate hydroxymethyltransferase 2.